A 286-amino-acid polypeptide reads, in one-letter code: 4-hydroxybenzoate octaprenyltransferase (286 aa).

A run of 7 helical transmembrane segments spans residues 20–40 (IGTLLLMWPCLMALVLAAGGM), 43–63 (LKVLVIFIIGVVVMRACGCII), 96–116 (LFVVMGLIAFGLVLMLNPLVV), 142–162 (FLGVVWSWSIPMAYAAQTGTV), 167–187 (WWLFAANWCWTVAYDTMYAMV), 210–230 (QVIALFQLAALACFIIAGWAA), and 234–254 (LVYALGIITFVGFSLYQQKLI).

Belongs to the UbiA prenyltransferase family. The cofactor is Mg(2+).

The protein resides in the cell inner membrane. The catalysed reaction is all-trans-octaprenyl diphosphate + 4-hydroxybenzoate = 4-hydroxy-3-(all-trans-octaprenyl)benzoate + diphosphate. It functions in the pathway cofactor biosynthesis; ubiquinone biosynthesis. In terms of biological role, catalyzes the prenylation of para-hydroxybenzoate (PHB) with an all-trans polyprenyl group. Mediates the second step in the final reaction sequence of ubiquinone-8 (UQ-8) biosynthesis, which is the condensation of the polyisoprenoid side chain with PHB, generating the first membrane-bound Q intermediate 3-octaprenyl-4-hydroxybenzoate. The polypeptide is 4-hydroxybenzoate octaprenyltransferase (Shewanella woodyi (strain ATCC 51908 / MS32)).